Reading from the N-terminus, the 188-residue chain is HGPRTase-like protein (188 aa).

This sequence belongs to the purine/pyrimidine phosphoribosyltransferase family. Archaeal HPRT subfamily.

In terms of biological role, may catalyze a purine salvage reaction, the substrate is unknown. The polypeptide is HGPRTase-like protein (Halobacterium salinarum (strain ATCC 29341 / DSM 671 / R1)).